Reading from the N-terminus, the 550-residue chain is Glucose import ATP-binding protein TsgD13 (550 aa).

2 consecutive ABC transporter domains span residues 7-270 and 287-533; these read LRME…VGRE and LRAR…TGGG. 39–46 contributes to the ATP binding site; it reads GENGAGKS. The tract at residues 529–550 is disordered; it reads MTGGGDATATAGAQVRGLGGSS.

It belongs to the ABC transporter superfamily. The complex is composed of two ATP-binding proteins (TsgD13), two transmembrane proteins (TsgB13 and TsgC13) and a solute-binding protein (TsgA13).

The protein resides in the cell membrane. The enzyme catalyses D-glucose(out) + ATP + H2O = D-glucose(in) + ADP + phosphate + H(+). In terms of biological role, part of an ABC transporter complex involved in glucose import. Responsible for energy coupling to the transport system. This Haloferax volcanii (strain ATCC 29605 / DSM 3757 / JCM 8879 / NBRC 14742 / NCIMB 2012 / VKM B-1768 / DS2) (Halobacterium volcanii) protein is Glucose import ATP-binding protein TsgD13 (tsgD13).